The sequence spans 147 residues: UPF0178 protein Patl_1318 (147 aa).

The protein belongs to the UPF0178 family.

This chain is UPF0178 protein Patl_1318, found in Pseudoalteromonas atlantica (strain T6c / ATCC BAA-1087).